A 295-amino-acid polypeptide reads, in one-letter code: MTNIKNTFGNKFIGAHVSAAGGVDQAPLRAREIGANAFALFTKNQRQWVAKPLEEKTISAFKANCKMLGFGAEHILPHDSYLINLGAPEEEKLNKSRAAFIDEMERCNQLGLTLLNFHPGSHLKKVSEQECLATIAESINLAHKAVPNVIAVIENTAGQGTNLGWKFEHLAEIIDQVENKERVGVCLDTCHTFTAGYDLRTKEDCEHTFAEFDRVVGMHYLRAMHLNDSKVEFASKVDRHHSLGKGEIGWSCFEYIAKDPRFDGIPLILETIDPDIWQQEINTLRKFHIEEIANS.

The Zn(2+) site is built by His78, His118, Glu154, Asp188, His191, His225, Asp238, His240, and Glu270.

The protein belongs to the AP endonuclease 2 family. Zn(2+) serves as cofactor.

It carries out the reaction Endonucleolytic cleavage to 5'-phosphooligonucleotide end-products.. Functionally, endonuclease IV plays a role in DNA repair. It cleaves phosphodiester bonds at apurinic or apyrimidinic (AP) sites, generating a 3'-hydroxyl group and a 5'-terminal sugar phosphate. This chain is Probable endonuclease 4, found in Vibrio campbellii (strain ATCC BAA-1116).